A 572-amino-acid chain; its full sequence is Acyl-coenzyme A synthetase ACSM2, mitochondrial (572 aa).

A mitochondrion-targeting transit peptide spans 1 to 46 (MHWLWKIPRLCTFWGTEMFHRTFHMNIKKLMPIQWGHQEVPAKFNF). A CoA-binding site is contributed by Q139. Residues 221 to 229 (TSGTSGPPK), 359 to 364 (EIYGQT), D446, and R461 contribute to the ATP site. T364 is a substrate binding site. 469–471 (SGY) is a binding site for CoA. Position 472 (R472) interacts with substrate. CoA contacts are provided by residues R501, K532, and 540–542 (YPR). K557 is an ATP binding site.

The protein belongs to the ATP-dependent AMP-binding enzyme family. As to quaternary structure, monomer. Mg(2+) serves as cofactor. The cofactor is Mn(2+). As to expression, detected in kidney, in proximal tubules.

It localises to the mitochondrion. It catalyses the reaction a medium-chain fatty acid + ATP + CoA = a medium-chain fatty acyl-CoA + AMP + diphosphate. The enzyme catalyses benzoate + ATP + CoA = benzoyl-CoA + AMP + diphosphate. It carries out the reaction hexanoate + ATP + CoA = hexanoyl-CoA + AMP + diphosphate. The catalysed reaction is butanoate + ATP + CoA = butanoyl-CoA + AMP + diphosphate. It catalyses the reaction octanoate + ATP + CoA = octanoyl-CoA + AMP + diphosphate. The enzyme catalyses decanoate + ATP + CoA = decanoyl-CoA + AMP + diphosphate. Its function is as follows. Catalyzes the activation of fatty acids by CoA to produce an acyl-CoA, the first step in fatty acid metabolism. Capable of activating medium-chain fatty acids (e.g. butyric (C4) to decanoic (C10) acids), and certain carboxylate-containing xenobiotics, e.g. benzoate. The chain is Acyl-coenzyme A synthetase ACSM2, mitochondrial (Acsm2) from Rattus norvegicus (Rat).